Consider the following 261-residue polypeptide: Putative carbamate hydrolase RutD (261 aa).

The AB hydrolase-1 domain maps to 14-119 (PTILLSSGLG…LINAWSKADP (106 aa)).

Belongs to the AB hydrolase superfamily. Hydrolase RutD family.

The catalysed reaction is carbamate + 2 H(+) = NH4(+) + CO2. Functionally, involved in pyrimidine catabolism. May facilitate the hydrolysis of carbamate, a reaction that can also occur spontaneously. The sequence is that of Putative carbamate hydrolase RutD from Agrobacterium fabrum (strain C58 / ATCC 33970) (Agrobacterium tumefaciens (strain C58)).